The following is a 456-amino-acid chain: MTOR-associated protein MEAK7 (456 aa).

A lipid anchor (N-myristoyl glycine) is attached at glycine 2. Residues 244–412 (SILDVLSVMY…FDKMEVWAVG (169 aa)) form the TLDc domain.

In terms of assembly, interacts (via C-terminal domain) with MTOR and MLST8; the interaction with MTOR increases upon nutrient stimulation.

The protein localises to the membrane. It localises to the cytoplasm. The protein resides in the lysosome. Its function is as follows. Activates an alternative mTOR signaling through RPS6KB2 activation and EIF4EBP1 repression to regulate cell proliferation and migration. Recruits MTOR at the lysosome, essential for MTOR signaling at the lysosome. The sequence is that of MTOR-associated protein MEAK7 from Homo sapiens (Human).